A 568-amino-acid polypeptide reads, in one-letter code: MRMSNLYIPTLKEVPKEAEVVSHQLMLRAGLIRNLTAGVYSFLPLGYRVIKKIEGIIRKVMDESGAQEVLMPVIHTSDLWKESGRWEKFGPLMIKFEDRKGREYCLGPTHEEVITDLVRDEIRSYKDLPLNLYQIQTKVRDEIRPRFGLMRSREFIMKDAYSFDRDYEGLDKSYQVMYGAYTEVFNRCGLEVRAVEADTGAMGGKDSHEFMVLAESGEDDIAFCNRCDYAANVERAEARYVKSEKNEEIKPLEKVETPGKKKIDELVEFLKMPSEKMIKAVAYLADGEPVLALVRGDDELNEVKLINYLDVIELTPVVDEDFPQYYNSYAGYVGPIGLKNVRIIADRKVKDIVNGICGANEENYHFINVNPERDFSVEKYLDIRKVKEGDQCPHCEGTIEIKSGIEVGHIFKLGTKYSESMGATYLDENGKEQPIVMGSYGIGVTRLVAAAIEQNHDEHGIIWPKAIAPYQVIILPLGKGDEVNKRAEELYLELKDNNIEVLLDDRNERAGVKFNDADLIGIPLRLTIGSRSLDKGVIEARVRGTGQDYEISVEDAIKDIKKLLENVK.

It belongs to the class-II aminoacyl-tRNA synthetase family. ProS type 1 subfamily. In terms of assembly, homodimer.

It is found in the cytoplasm. It catalyses the reaction tRNA(Pro) + L-proline + ATP = L-prolyl-tRNA(Pro) + AMP + diphosphate. Catalyzes the attachment of proline to tRNA(Pro) in a two-step reaction: proline is first activated by ATP to form Pro-AMP and then transferred to the acceptor end of tRNA(Pro). As ProRS can inadvertently accommodate and process non-cognate amino acids such as alanine and cysteine, to avoid such errors it has two additional distinct editing activities against alanine. One activity is designated as 'pretransfer' editing and involves the tRNA(Pro)-independent hydrolysis of activated Ala-AMP. The other activity is designated 'posttransfer' editing and involves deacylation of mischarged Ala-tRNA(Pro). The misacylated Cys-tRNA(Pro) is not edited by ProRS. The sequence is that of Proline--tRNA ligase from Halothermothrix orenii (strain H 168 / OCM 544 / DSM 9562).